Consider the following 1227-residue polypeptide: Codanin-1 (1227 aa).

An N-acetylalanine modification is found at Ala2. Positions 63-294 are disordered; sequence RVLPQGPPTP…SLTDEPADPA (232 aa). Phosphothreonine is present on Thr71. The segment covering 128 to 137 has biased composition (basic and acidic residues); sequence ARERGGRGLE. Low complexity predominate over residues 155–167; the sequence is GSGSPSRPSLTLS. The segment at 188 to 208 is interaction with ASF1A/B; the sequence is PTGTKPSRRINPTPVSEERSL. A compositionally biased stretch (polar residues) spans 214–232; sequence CFTSPPISCVPSSQPSALD. Positions 247-260 are enriched in basic and acidic residues; that stretch reads LQEEREMLRKERSK. Phosphoserine is present on residues Ser265 and Ser285. 2 consecutive transmembrane segments (helical) span residues 312-332 and 626-646; these read CIAENLVPNLFLELFFVFQLL and FAVVLLSLRLLAKFLGFVAFL.

Found in a cytosolic complex with ASF1A, ASF1B, IPO4 and histones H3.1 and H4. As to expression, ubiquitously expressed. Isoform 3 is not found in erythroid cells.

It localises to the cytoplasm. Its subcellular location is the nucleus. The protein resides in the membrane. May act as a negative regulator of ASF1 in chromatin assembly. The polypeptide is Codanin-1 (CDAN1) (Homo sapiens (Human)).